Here is a 446-residue protein sequence, read N- to C-terminus: tRNA modification GTPase MnmE (446 aa).

Arginine 22, glutamate 80, and lysine 119 together coordinate (6S)-5-formyl-5,6,7,8-tetrahydrofolate. In terms of domain architecture, TrmE-type G spans 215–370 (GLSLVIAGRP…LKKVIKQVVG (156 aa)). Asparagine 225 provides a ligand contact to K(+). GTP contacts are provided by residues 225–230 (NAGKST), 244–250 (TEIAGTT), and 269–272 (DTAG). Serine 229 contributes to the Mg(2+) binding site. Residues threonine 244, isoleucine 246, and threonine 249 each coordinate K(+). Threonine 250 contacts Mg(2+). Lysine 446 is a (6S)-5-formyl-5,6,7,8-tetrahydrofolate binding site.

It belongs to the TRAFAC class TrmE-Era-EngA-EngB-Septin-like GTPase superfamily. TrmE GTPase family. As to quaternary structure, homodimer. Heterotetramer of two MnmE and two MnmG subunits. K(+) serves as cofactor.

The protein localises to the cytoplasm. Its function is as follows. Exhibits a very high intrinsic GTPase hydrolysis rate. Involved in the addition of a carboxymethylaminomethyl (cmnm) group at the wobble position (U34) of certain tRNAs, forming tRNA-cmnm(5)s(2)U34. This chain is tRNA modification GTPase MnmE, found in Legionella pneumophila subsp. pneumophila (strain Philadelphia 1 / ATCC 33152 / DSM 7513).